Reading from the N-terminus, the 270-residue chain is A-type potassium channel modulatory protein KCNIP2 (270 aa).

Positions 1–17 are enriched in basic and acidic residues; the sequence is MRGQGRKESLSDSRDLD. Positions 1–33 are disordered; the sequence is MRGQGRKESLSDSRDLDGSYDQLTGHPPGPTKK. Serine 9 bears the Phosphoserine mark. 2 S-palmitoyl cysteine lipidation sites follow: cysteine 45 and cysteine 46. The EF-hand 1; degenerate domain occupies 81-137; the sequence is FELSTVCHRPEGLEQLQEQTKFTRKELQVLYRGFKNECPSGIVNEENFKQIYSQFFP. EF-hand domains are found at residues 140-175, 176-211, and 224-259; these read DSST…ILRG, TIDD…IYDM, and APRE…DENI. Aspartate 153, asparagine 155, aspartate 157, serine 159, aspartate 164, aspartate 189, asparagine 191, aspartate 193, cysteine 195, glutamate 200, aspartate 237, asparagine 239, aspartate 241, and glutamate 248 together coordinate Ca(2+). Positions 257-270 are interaction with KCND2; sequence ENIMRSMQLFDNVI.

This sequence belongs to the recoverin family. In terms of assembly, component of heteromultimeric potassium channels. Identified in potassium channel complexes containing KCND1, KCND2, KCND3, KCNIP1, KCNIP2, KCNIP3, KCNIP4, DPP6 and DPP10. The KCND2-KCNIP2 channel complex contains four KCND2 and four KCNIP2 subunits. Interacts with KCND2. Probably part of a complex consisting of KCNIP1, KCNIP2 isoform 3 and KCND2. At least isoform 2 and isoform 3 can self-associate to form homodimers and homotetramers. Isoform 3 interacts with KCNIP1 in a calcium-dependent manner. Interacts with KCND3; each KCNIP2 monomer interacts with two adjacent KCND3 subunits, through both the N-terminal inactivation ball of a KCND3 subunit and a C-terminal helix from the adjacent KCND3 subunit, clamping them together; this interaction modulates the channel gating kinetics. In terms of processing, palmitoylated. Palmitoylation enhances association with the plasma membrane. In terms of tissue distribution, expressed in heart ventricle with isoform 1 as most prominent form.

Its subcellular location is the cell membrane. Regulatory subunit of Kv4/D (Shal)-type voltage-gated rapidly inactivating A-type potassium channels. Modulates channel density, inactivation kinetics and rate of recovery from inactivation in a calcium-dependent and isoform-specific manner. Involved in KCND2 and KCND3 trafficking to the cell surface. May be required for the expression of I(To) currents in the heart. In Mustela putorius furo (European domestic ferret), this protein is A-type potassium channel modulatory protein KCNIP2.